A 582-amino-acid chain; its full sequence is MKRSMYAGRVREEHIGTTITLKGWVSRRRDLGGLIFIDLRDREGVMQLVINPEEVSSDVMATAERLRSEYVIEVEGFVEARQQANDKLATGMVELKVSALTILNTAKTTPFEIKDDVEVSDDTRLRYRYLDLRRPEMLENFKLRAKVTHSIRNYLDDLEFIDVETPMLTKSTPEGARDYLVPSRVSQGHFYALPQSPQITKQLLMNAGFDRYYQIVKCFRDEDLRGDRQPEFTQVDLETSFLSEQEIQDIVEGMIAKVMKETKEIDVTLPFPRMSYDVAMNSYGSDKPDTRFEMLLQDLTVTVKGNDFKVFSEAPAVKAIVVKGNADRYSRKDIDKLTEFAKQFGAKGLAWVKVTDGQLAGPVAKFLTAIETELSSQLKLAENDLVLFVADTLEVANNTLGALRNRIAKDLDMIDQSQFNFLWVVDWPMFEWSEEEGRYMSAHHPFTLPTPESAHELEGDLAKVRAIAYDIVLNGYELGGGSLRINQKEMQERMFKALGFTADEANDQFGFLLEAMDYGFPPHGGLAIGLDRFVMLLAGKDNIREVIAFPKNNKASDPMTQAPSLVSENQLEELSLQIESHD.

An L-aspartate-binding site is contributed by glutamate 174. The interval 198-201 (QITK) is aspartate. Arginine 220 contributes to the L-aspartate binding site. ATP-binding positions include 220 to 222 (RDE) and glutamine 229. Histidine 443 contributes to the L-aspartate binding site. Glutamate 477 contacts ATP. An L-aspartate-binding site is contributed by arginine 484. Residue 529–532 (GLDR) coordinates ATP.

It belongs to the class-II aminoacyl-tRNA synthetase family. Type 1 subfamily. Homodimer.

Its subcellular location is the cytoplasm. The enzyme catalyses tRNA(Asp) + L-aspartate + ATP = L-aspartyl-tRNA(Asp) + AMP + diphosphate. Its function is as follows. Catalyzes the attachment of L-aspartate to tRNA(Asp) in a two-step reaction: L-aspartate is first activated by ATP to form Asp-AMP and then transferred to the acceptor end of tRNA(Asp). The polypeptide is Aspartate--tRNA ligase (Streptococcus pyogenes serotype M1).